The chain runs to 185 residues: Translation initiation factor IF-3 (185 aa).

It belongs to the IF-3 family. Monomer.

The protein localises to the cytoplasm. In terms of biological role, IF-3 binds to the 30S ribosomal subunit and shifts the equilibrium between 70S ribosomes and their 50S and 30S subunits in favor of the free subunits, thus enhancing the availability of 30S subunits on which protein synthesis initiation begins. The sequence is that of Translation initiation factor IF-3 from Streptococcus pneumoniae serotype 19F (strain G54).